The sequence spans 993 residues: General transcription factor II-I repeat domain-containing protein 1 (993 aa).

GTF2I-like repeat units follow at residues 117-211 (LGPT…EPKS) and 332-426 (LRET…DGTT). The interval 461 to 480 (GSRSEKSSISDECEPGTSSE) is disordered. GTF2I-like repeat units follow at residues 597 to 691 (DGIG…LEDC), 727 to 821 (LSRI…RPDD), and 824 to 918 (ANRL…ICSE). The tract at residues 916–961 (CSEPPKIKNGNTGPKRKRKRVSEGNSISSASSNCSSSSSSSSNMDP) is disordered. Positions 929-936 (PKRKRKRV) match the Nuclear localization signal motif. The span at 938 to 961 (EGNSISSASSNCSSSSSSSSNMDP) shows a compositional bias: low complexity.

Belongs to the TFII-I family. In terms of assembly, interacts (via repeats 4-5) with foxh1/fast1 (via Fork-head domain). Interacts with smad2 and smad3 (via MH1 domain) in a ligand (activin)-dependent manner. Interacts with pou5f1.1/oct-25 to form a repression complex on the promoters of the gsc and mix2 genes. As to expression, uniformly expressed in the embryo in pre- and early gastrula stages. Enriched in the head region of early neurula through tailbud stages.

It is found in the nucleus. Functionally, transcription factor that activates a subset of organizer-specific genes. Binds to the distal element (DE) of the gsc promoter to regulate its expression. In the presence of pou5f1.1/oct-25, forms a repression complex on the promoter of the gsc and mix2 genes to inhibit their transcription. This is General transcription factor II-I repeat domain-containing protein 1 (gtf2ird1) from Xenopus laevis (African clawed frog).